Reading from the N-terminus, the 105-residue chain is uncharacterized protein (105 aa).

The interval 80 to 105 (TGGPTSSTCTRRSDLATGRGSDRRPD) is disordered.

This is an uncharacterized protein from Micromonospora rosea.